A 606-amino-acid polypeptide reads, in one-letter code: MAAESSYGFVYGVSGPVVTAEKMAGSAMYELVRVGHQELVGEIIRLEGDYATIQVYEETSGVTIGDPVLRTGKPLSVELGPGIMGSIFDGIQRPLKDIADITQSIYIPKGVSTNALSREARWDFVVSKDLRVGGHVTGGDIVGTVDENLLIKHKILLPPSACGTVTFVAPSGQYTVEDTLLELEFAGRKQKFSMLQVWPVRNPRPVTEKLAANNPLLCGQRVLDALFPCVQGGTTAIPGAFGCGKTVISQSLSKYSNSDAIIYVGCGERGNEMSEVLRDFPELTMEVNGTTTSIMKRTALVANTSNMPVAAREASIYTGITLAEYFRDMGLNVAMMADSTSRWAEALREISGRLGEMPADSGYPAYLAARLASFYERAGRVKCLGSPEREGSVTIVGAVSPPGGDFADPVTSATLGIVQVFWGLDKKLAQRKHFPSINWLISYSKYMRALEEFYEKNYPEFVHLRTKCKEILQEEEDLSEIVQLVGKASLAESDKITLEVAKIIKDDFLQQNGYTPYDRFCPFYKTVGMLKNMIGFYDLARHSVEATAQSENKITWNVIKDNMGDLIYQLSAMKFKDPVADGEAKIRKDYDDLAEAMANGFRNLED.

Residue 239 to 246 coordinates ATP; that stretch reads GAFGCGKT.

This sequence belongs to the ATPase alpha/beta chains family. In terms of assembly, V-ATPase is a heteromultimeric enzyme made up of two complexes: the ATP-hydrolytic V1 complex and the proton translocation V0 complex. The V1 complex consists of three catalytic AB heterodimers that form a heterohexamer, three peripheral stalks each consisting of EG heterodimers, one central rotor including subunits D and F, and the regulatory subunits C and H. The proton translocation complex V0 consists of the proton transport subunit a, a ring of proteolipid subunits c9c'', rotary subunit d, subunits e and f, and the accessory subunits vah-19/Ac45 and vah-20/PRR.

It catalyses the reaction ATP + H2O + 4 H(+)(in) = ADP + phosphate + 5 H(+)(out). Its function is as follows. Catalytic subunit of the V1 complex of vacuolar(H+)-ATPase (V-ATPase), a multisubunit enzyme composed of a peripheral complex (V1) that hydrolyzes ATP and a membrane integral complex (V0) that translocates protons. V-ATPase is responsible for acidifying and maintaining the pH of intracellular compartments and in some cell types, is targeted to the plasma membrane, where it is responsible for acidifying the extracellular environment. Required along with other vacuolar ATPase components for the removal of protein aggregates which form in immature oocytes in the distal gonad. This removal occurs as the oocytes mature and move to the proximal gonad, is triggered by the introduction of sperm through mating and occurs before fertilization. The introduction of sperm triggers V-ATPase accumulation in proximal oocytes and induces lysosomal acidification which leads to engulfing of protein aggregates by lysosomes and subsequent clearance of the aggregates. Lysosomal acidification also leads to changes in mitochondrial morphology and function. Mitochondria in distal immature oocytes are fragmented, produce high levels of reactive oxygen species (ROS) and have high membrane potential, indicative of metabolic inactivity. In contrast, mitochondria in proximal mature oocytes are tubular with lower ROS levels and membrane potential, indicative of an active metabolic state required for aggregate mobilization before clearance. Involved in receptor-mediated endocytosis. This is V-type proton ATPase catalytic subunit A from Caenorhabditis briggsae.